The primary structure comprises 602 residues: MSGKHREISVAEFFEKNKHILGYSNPAKAIITVVKEAVDNALDACEEAGILPDIFVRISKVDDHFKIVVEDNGPGIPREQIPKVFGKLLYGSRFHEIRQSRGQQGIGISAAVLYAQLTTGKPATVISKTPDEDRAKKVVLYINTKKNEPEIVEEGEEEWYLPSGTKIELEVAGNYVRERKQSVYEYLRETSVINPHAKITFVEPDGTINEFKRVTDDIPQPPKSIKPHPHGIELGTLMSMLKSTRATTLRRFLKEEFVRVGEKIADDVLRKAGFSGDETPQEMGRDDAAKLLNAFRQTDFLPPPTDCLSPIGEAMIAKSLMAEFQPEFVYAVTRKPKVYSGHPFLVEVGLAYGGEIKSEKVTLLRYANKIPLLYQQGGCALTKAVESVNWKSYGMVQNRGELPSAPAVILIHLASTNIPYTSESKESVAAIPEIIDETRLALQEVGRRLKEYLERKSRQQKKKKKEEMIGKVLPLIAKKVCEILEKEPLEIDRIVARIMGYLHVERIVEERDGVKVVTIRVSNFTRSKKSIKLYEMCSGNVEADGAKVSGSGYSTVTWSLEVKPDEEVEVSYRLKGRIINKNPLVEGVEEDLLSGAEVMNFA.

Residues Asn40, Asp71, 92-93 (SR), 102-109 (GQQGIGIS), and Lys425 each bind ATP.

The protein belongs to the TOP6B family. Homodimer. Heterotetramer of two Top6A and two Top6B chains.

The enzyme catalyses ATP-dependent breakage, passage and rejoining of double-stranded DNA.. Its function is as follows. Relaxes both positive and negative superturns and exhibits a strong decatenase activity. This chain is Type 2 DNA topoisomerase 6 subunit B, found in Archaeoglobus fulgidus (strain ATCC 49558 / DSM 4304 / JCM 9628 / NBRC 100126 / VC-16).